A 369-amino-acid chain; its full sequence is UDP-N-acetylglucosamine--N-acetylmuramyl-(pentapeptide) pyrophosphoryl-undecaprenol N-acetylglucosamine transferase (369 aa).

Residues 10–12 (TGG), Asn124, Arg166, Ser196, and Gln300 each bind UDP-N-acetyl-alpha-D-glucosamine.

Belongs to the glycosyltransferase 28 family. MurG subfamily.

Its subcellular location is the cell membrane. The catalysed reaction is di-trans,octa-cis-undecaprenyl diphospho-N-acetyl-alpha-D-muramoyl-L-alanyl-D-glutamyl-meso-2,6-diaminopimeloyl-D-alanyl-D-alanine + UDP-N-acetyl-alpha-D-glucosamine = di-trans,octa-cis-undecaprenyl diphospho-[N-acetyl-alpha-D-glucosaminyl-(1-&gt;4)]-N-acetyl-alpha-D-muramoyl-L-alanyl-D-glutamyl-meso-2,6-diaminopimeloyl-D-alanyl-D-alanine + UDP + H(+). The protein operates within cell wall biogenesis; peptidoglycan biosynthesis. Functionally, cell wall formation. Catalyzes the transfer of a GlcNAc subunit on undecaprenyl-pyrophosphoryl-MurNAc-pentapeptide (lipid intermediate I) to form undecaprenyl-pyrophosphoryl-MurNAc-(pentapeptide)GlcNAc (lipid intermediate II). This is UDP-N-acetylglucosamine--N-acetylmuramyl-(pentapeptide) pyrophosphoryl-undecaprenol N-acetylglucosamine transferase from Desulfitobacterium hafniense (strain DSM 10664 / DCB-2).